Consider the following 125-residue polypeptide: Glycine cleavage system H protein (125 aa).

The Lipoyl-binding domain maps to 23–105 (VSTVGITEHA…FEGGWLFKVR (83 aa)). N6-lipoyllysine is present on lysine 64.

This sequence belongs to the GcvH family. As to quaternary structure, the glycine cleavage system is composed of four proteins: P, T, L and H. Requires (R)-lipoate as cofactor.

Its function is as follows. The glycine cleavage system catalyzes the degradation of glycine. The H protein shuttles the methylamine group of glycine from the P protein to the T protein. The protein is Glycine cleavage system H protein of Streptomyces coelicolor (strain ATCC BAA-471 / A3(2) / M145).